Here is an 848-residue protein sequence, read N- to C-terminus: Trimethylamine-N-oxide reductase 1 (848 aa).

A signal peptide (tat-type signal) is located at residues 1–39 (MNNNDLFQASRRRFLAQLGGLTVAGMLGPSLLTPRRATA). Residue S191 participates in Mo-bis(molybdopterin guanine dinucleotide) binding.

This sequence belongs to the prokaryotic molybdopterin-containing oxidoreductase family. As to quaternary structure, interacts with the N-terminal domain of TorC. The cofactor is Mo-bis(molybdopterin guanine dinucleotide). In terms of processing, exported by the Tat system. The position of the signal peptide cleavage has been experimentally proven.

It localises to the periplasm. The enzyme catalyses trimethylamine + 2 Fe(III)-[cytochrome c] + H2O = trimethylamine N-oxide + 2 Fe(II)-[cytochrome c] + 3 H(+). Reduces trimethylamine-N-oxide (TMAO) into trimethylamine; an anaerobic reaction coupled to energy-yielding reactions. In Escherichia coli (strain K12), this protein is Trimethylamine-N-oxide reductase 1 (torA).